A 91-amino-acid polypeptide reads, in one-letter code: Small ribosomal subunit protein uS19 (91 aa).

The protein belongs to the universal ribosomal protein uS19 family.

Protein S19 forms a complex with S13 that binds strongly to the 16S ribosomal RNA. The chain is Small ribosomal subunit protein uS19 from Leptothrix cholodnii (strain ATCC 51168 / LMG 8142 / SP-6) (Leptothrix discophora (strain SP-6)).